The sequence spans 334 residues: MFASNVVVLNKRSIRFIQTQLPVKATVDMKFDLHLPKRSVIGKLPYHVEEPIVFVHGLFGSKKNYFNDCEKLSNLLQTPIYTIDFRNHGETEHAMPFDYETLTNDLIHFVEKHNLKNPSLIGYSLGAKVSMLALLKQPSLFKSAMIIDNSPVVQPEIVPFLKVFRKACVETVNKAGIRADDKDYRAKANQYMSKFIPNAGIKGYLLQNCINKPPKNPSPVINYNDGMIHWKNPVNHMANVSEENVADWPTIPEGIKFNGPVGFLRGTKSDFVLQKGRDAIAKLFPNNRIFDINATHFILNERPSEYVGIVADWFKTGRHDVEKLAAKKAKNAQL.

Residues 1–16 (MFASNVVVLNKRSIRF) constitute a mitochondrion transit peptide. Catalysis depends on charge relay system residues Ser124, Asp148, and His296.

This sequence belongs to the AB hydrolase superfamily.

It is found in the mitochondrion. It catalyses the reaction ethanol + acetyl-CoA = ethyl acetate + CoA. The enzyme catalyses acetyl-CoA + H2O = acetate + CoA + H(+). It carries out the reaction ethyl acetate + H2O = ethanol + acetate + H(+). Functionally, alcohol acetyltransferase that catalyzes the synthesis of ethyl acetate from ethanol and acetyl-CoA. Can also function as a thioesterase by hydrolyzing acetyl-CoA in the absence of ethanol, as well as esterase hydrolyzing ethyl acetate. In Hanseniaspora uvarum (Yeast), this protein is Ethanol acetyltransferase 1 (EAT1).